The sequence spans 79 residues: Large ribosomal subunit protein bL28 (79 aa).

A disordered region spans residues 1–26 (MAKVCQVTGKRPQSGNNVSHANKKTN). Over residues 11–20 (RPQSGNNVSH) the composition is skewed to polar residues.

The protein belongs to the bacterial ribosomal protein bL28 family.

In Coxiella burnetii (strain CbuK_Q154) (Coxiella burnetii (strain Q154)), this protein is Large ribosomal subunit protein bL28.